The following is a 421-amino-acid chain: Medium-chain specific acyl-CoA dehydrogenase, mitochondrial (421 aa).

The transit peptide at Met1–Ser25 directs the protein to the mitochondrion. 2 positions are modified to N6-acetyllysine; alternate: Lys30 and Lys69. Residues Lys30 and Lys69 each carry the N6-succinyllysine; alternate modification. Lys79 is modified (N6-acetyllysine). Tyr158–Ser167 contributes to the FAD binding site. Ser167 is a binding site for octanoyl-CoA. The residue at position 179 (Lys179) is an N6-succinyllysine. Residue Trp191–Thr193 participates in FAD binding. An N6-acetyllysine; alternate modification is found at Lys212. The residue at position 212 (Lys212) is an N6-succinyllysine; alternate. Position 216 (Ser216) interacts with octanoyl-CoA. An N6-acetyllysine; alternate mark is found at Lys217, Lys235, Lys259, and Lys271. N6-succinyllysine; alternate occurs at positions 217, 235, 259, and 271. Octanoyl-CoA contacts are provided by Asp278 and Arg281. N6-acetyllysine is present on Lys301. FAD is bound by residues Arg306–Thr308 and His316–Gln317. Residues Arg349 and Thr351 each contribute to the octanoyl-CoA site. The residue at position 351 (Thr351) is a Phosphothreonine. Gln374–Gly378 is an FAD binding site. Octanoyl-CoA is bound at residue Glu401. Glu401 (proton acceptor) is an active-site residue. An FAD-binding site is contributed by Gly402 to Gln405.

This sequence belongs to the acyl-CoA dehydrogenase family. Homotetramer. Interacts with the heterodimeric electron transfer flavoprotein ETF. FAD serves as cofactor. Acetylated. Could occur at proximity of the cofactor-binding sites and reduce the catalytic activity. Could be deacetylated by SIRT3.

The protein resides in the mitochondrion matrix. The enzyme catalyses a medium-chain 2,3-saturated fatty acyl-CoA + oxidized [electron-transfer flavoprotein] + H(+) = a medium-chain (2E)-enoyl-CoA + reduced [electron-transfer flavoprotein]. It catalyses the reaction pentanoyl-CoA + oxidized [electron-transfer flavoprotein] + H(+) = (2E)-pentenoyl-CoA + reduced [electron-transfer flavoprotein]. The catalysed reaction is hexanoyl-CoA + oxidized [electron-transfer flavoprotein] + H(+) = (2E)-hexenoyl-CoA + reduced [electron-transfer flavoprotein]. It carries out the reaction octanoyl-CoA + oxidized [electron-transfer flavoprotein] + H(+) = (2E)-octenoyl-CoA + reduced [electron-transfer flavoprotein]. The enzyme catalyses decanoyl-CoA + oxidized [electron-transfer flavoprotein] + H(+) = (2E)-decenoyl-CoA + reduced [electron-transfer flavoprotein]. It catalyses the reaction dodecanoyl-CoA + oxidized [electron-transfer flavoprotein] + H(+) = (2E)-dodecenoyl-CoA + reduced [electron-transfer flavoprotein]. The catalysed reaction is tetradecanoyl-CoA + oxidized [electron-transfer flavoprotein] + H(+) = (2E)-tetradecenoyl-CoA + reduced [electron-transfer flavoprotein]. It carries out the reaction oxidized [electron-transfer flavoprotein] + hexadecanoyl-CoA + H(+) = (2E)-hexadecenoyl-CoA + reduced [electron-transfer flavoprotein]. Its pathway is lipid metabolism; mitochondrial fatty acid beta-oxidation. Medium-chain specific acyl-CoA dehydrogenase is one of the acyl-CoA dehydrogenases that catalyze the first step of mitochondrial fatty acid beta-oxidation, an aerobic process breaking down fatty acids into acetyl-CoA and allowing the production of energy from fats. The first step of fatty acid beta-oxidation consists in the removal of one hydrogen from C-2 and C-3 of the straight-chain fatty acyl-CoA thioester, resulting in the formation of trans-2-enoyl-CoA. Electron transfer flavoprotein (ETF) is the electron acceptor that transfers electrons to the main mitochondrial respiratory chain via ETF-ubiquinone oxidoreductase (ETF dehydrogenase). Among the different mitochondrial acyl-CoA dehydrogenases, medium-chain specific acyl-CoA dehydrogenase acts specifically on acyl-CoAs with saturated 6 to 12 carbons long primary chains. In Mus musculus (Mouse), this protein is Medium-chain specific acyl-CoA dehydrogenase, mitochondrial.